A 129-amino-acid chain; its full sequence is Large ribosomal subunit protein bL12 (129 aa).

Belongs to the bacterial ribosomal protein bL12 family. As to quaternary structure, homodimer. Part of the ribosomal stalk of the 50S ribosomal subunit. Forms a multimeric L10(L12)X complex, where L10 forms an elongated spine to which 2 to 4 L12 dimers bind in a sequential fashion. Binds GTP-bound translation factors.

In terms of biological role, forms part of the ribosomal stalk which helps the ribosome interact with GTP-bound translation factors. Is thus essential for accurate translation. This is Large ribosomal subunit protein bL12 from Treponema denticola (strain ATCC 35405 / DSM 14222 / CIP 103919 / JCM 8153 / KCTC 15104).